A 405-amino-acid polypeptide reads, in one-letter code: Diaminopimelate decarboxylase (405 aa).

K46 is modified (N6-(pyridoxal phosphate)lysine). Residues G225 and 259–262 (EPGR) contribute to the pyridoxal 5'-phosphate site. Residues R262, R298, and Y302 each contribute to the substrate site. C329 acts as the Proton donor in catalysis. E330 and Y358 together coordinate substrate. Y358 contributes to the pyridoxal 5'-phosphate binding site.

Belongs to the Orn/Lys/Arg decarboxylase class-II family. LysA subfamily. As to quaternary structure, homodimer. The cofactor is pyridoxal 5'-phosphate.

It carries out the reaction meso-2,6-diaminopimelate + H(+) = L-lysine + CO2. It functions in the pathway amino-acid biosynthesis; L-lysine biosynthesis via DAP pathway; L-lysine from DL-2,6-diaminopimelate: step 1/1. Its function is as follows. Specifically catalyzes the decarboxylation of meso-diaminopimelate (meso-DAP) to L-lysine. The sequence is that of Diaminopimelate decarboxylase from Helicobacter pylori (strain J99 / ATCC 700824) (Campylobacter pylori J99).